The following is a 240-amino-acid chain: Seed lectin (240 aa).

An N-linked (GlcNAc...) asparagine glycan is attached at asparagine 111. Residues glutamate 123 and aspartate 125 each coordinate Mn(2+). Ca(2+) contacts are provided by aspartate 125, asparagine 129, and aspartate 132. Mn(2+) contacts are provided by aspartate 132 and histidine 137. Asparagine 183 carries an N-linked (GlcNAc...) asparagine glycan.

Belongs to the leguminous lectin family. As to quaternary structure, homotetramer. In terms of processing, partially N-glycosylated at Asn-111 and Asn-183 with the heptasaccharide [(beta-xylosyl-1,2)(alpha-mannosyl-1,6)(alpha-mannosyl-1,3)]beta-manosyl-1,4-GlcNAC-beta-1,4-GlcNAc-beta-1,4 [alpha-fucosyl-1,3]GlcNAc. A small proportion of alpha chains are proteolytically cleaved at 114-115 into gamma and beta chains. This is probably dependent on the deglycosylation of Asn-111. As to expression, seed.

Functionally, lectin that binds galactose. The chain is Seed lectin from Vatairea macrocarpa.